The following is a 243-amino-acid chain: MKAARQQAIVDLLLNHTSLTTEALSEQLKVSKETIRRDLNELQTQGKILRNHGRAKYIHRQNQDSGDPFHIRLKSHYAHKADIAREALAWIEEGMVIALDASSTCWYLARQLPDINIQVFTNSHPICHELGKRERIQLISSGGTLERKYGCYVNPSLISQLKSLEIDLFIFSCEGIDSSGALWDSNAINADYKSMLLKRAAQSLLLIDKSKFNRSGEARIGHLDEVTHIISDERQVATSLVTA.

The HTH deoR-type domain maps to 1–57 (MKAARQQAIVDLLLNHTSLTTEALSEQLKVSKETIRRDLNELQTQGKILRNHGRAKY). Residues 19-38 (LTTEALSEQLKVSKETIRRD) constitute a DNA-binding region (H-T-H motif).

In terms of biological role, transcriptional activator of the fuc operon. In Escherichia coli (strain K12), this protein is L-fucose operon activator (fucR).